The sequence spans 228 residues: Non-specific lipid-transfer protein EPAD1 (228 aa).

The first 24 residues, 1–24, serve as a signal peptide directing secretion; that stretch reads MERSHLAVLLGLLAFAAGVPAAAA. Cystine bridges form between C40-C62, C63-C105, and C78-C119. N94 carries an N-linked (GlcNAc...) asparagine glycan. The interval 124–207 is disordered; the sequence is PPASIVTAPP…PPRSGASSSL (84 aa). Positions 145-162 are enriched in pro residues; that stretch reads REAPPPPPAAEKLSPPPQ.

It belongs to the plant LTP family. As to expression, expressed in young panicles. Specifically expressed in pollen mother cells and young microspores.

Its subcellular location is the cell membrane. Its function is as follows. Plant non-specific lipid-transfer protein that binds phospholipids in vitro. Required for correct pollen exine patterning by controlling the continuity and homogeneity of the primexine distribution. The polypeptide is Non-specific lipid-transfer protein EPAD1 (Oryza sativa subsp. japonica (Rice)).